We begin with the raw amino-acid sequence, 353 residues long: Putative transport protein YrrI (353 aa).

The next 8 membrane-spanning stretches (helical) occupy residues 8–28 (LLLW…FFML), 37–57 (LVIK…YLLL), 77–97 (IYVL…PVLI), 165–185 (FLIA…IELM), 220–240 (LLVC…FGLP), 243–263 (LILG…PFIG), 269–289 (LIAM…VFIL), and 311–331 (VVIM…GMIL).

It belongs to the autoinducer-2 exporter (AI-2E) (TC 2.A.86) family.

It localises to the cell membrane. This is Putative transport protein YrrI (yrrI) from Bacillus subtilis (strain 168).